The primary structure comprises 1399 residues: FYVE, RhoGEF and PH domain-containing protein 6 (1399 aa).

6 disordered regions span residues 1-99, 138-164, 185-210, 235-281, 299-341, and 367-479; these read MTSA…KDVR, MKEN…SEKC, LTQQ…NGDH, AHHN…DGIS, YTSK…NGSS, and PVDE…KKPQ. Residues 50–60 are compositionally biased toward low complexity; the sequence is PAIAPKPKVPT. Residues 259–276 show a composition bias toward basic and acidic residues; that stretch reads AESRGHTDSCEPENKRVA. A compositionally biased stretch (basic residues) spans 307–321; it reads KPRKTHAAARLRRQK. Composition is skewed to polar residues over residues 332 to 341 and 377 to 402; these read EPGNSNNGSS and RALT…QQTP. A compositionally biased stretch (low complexity) spans 403 to 418; that stretch reads SLDTDSSLTSDSSGSG. Positions 428-453 are enriched in polar residues; the sequence is TYTQCSTQPLSLPKQVTSACTDQPPA. S494, S531, and S583 each carry phosphoserine. Residues 515–542 form a disordered region; sequence RNYLHHPGPPNHGASASPFDMPNPTSEK. Disordered regions lie at residues 631 to 650 and 657 to 678; these read QHGD…GLES and TGEE…SLES. 2 positions are modified to phosphoserine: S670 and S697. Positions 768–840 are disordered; the sequence is APDGQLQLDP…KQDEDAGMKS (73 aa). The span at 802 to 817 shows a compositional bias: acidic residues; that stretch reads PSDEEVINSSDEDDVS. Over residues 821–838 the composition is skewed to basic and acidic residues; it reads SKGEPDPLEDKQDEDAGM. The region spanning 841–1030 is the DH domain; that stretch reads KVHHIAKEIM…IEVANHANDT (190 aa). One can recognise a PH 1 domain in the interval 1059–1153; it reads VFLKEGTLMK…WLEAISSSIE (95 aa). S1167 is subject to Phosphoserine. An FYVE-type zinc finger spans residues 1191–1250; that stretch reads DTRATMCMICTSEFTLTWRRHHCRACGKIVCQACSSNKYGLDYLKGQLARVCEHCFQELQ. The Zn(2+) site is built by C1197, C1200, C1213, C1216, C1221, C1224, C1242, and C1245. Residues 1302–1398 enclose the PH 2 domain; it reads DSTMSGYLYR…WIDAFQEGTV (97 aa).

It localises to the cytoplasm. Its subcellular location is the cytoskeleton. Functionally, may activate CDC42, a member of the Ras-like family of Rho- and Rac proteins, by exchanging bound GDP for free GTP. May play a role in regulating the actin cytoskeleton and cell shape. This is FYVE, RhoGEF and PH domain-containing protein 6 (Fgd6) from Mus musculus (Mouse).